Here is a 395-residue protein sequence, read N- to C-terminus: Nicotinate phosphoribosyltransferase (395 aa).

A Phosphohistidine; by autocatalysis modification is found at His222.

This sequence belongs to the NAPRTase family. Post-translationally, transiently phosphorylated on a His residue during the reaction cycle. Phosphorylation strongly increases the affinity for substrates and increases the rate of nicotinate D-ribonucleotide production. Dephosphorylation regenerates the low-affinity form of the enzyme, leading to product release.

It catalyses the reaction nicotinate + 5-phospho-alpha-D-ribose 1-diphosphate + ATP + H2O = nicotinate beta-D-ribonucleotide + ADP + phosphate + diphosphate. The protein operates within cofactor biosynthesis; NAD(+) biosynthesis; nicotinate D-ribonucleotide from nicotinate: step 1/1. Catalyzes the synthesis of beta-nicotinate D-ribonucleotide from nicotinate and 5-phospho-D-ribose 1-phosphate at the expense of ATP. This is Nicotinate phosphoribosyltransferase from Polaromonas sp. (strain JS666 / ATCC BAA-500).